The primary structure comprises 187 residues: 3'-5' DNA exonuclease Cap18 (187 aa).

The Exonuclease domain occupies 9 to 173 (VSVDVETSGP…HDARYQAELF (165 aa)). D12, M25, H160, and D165 together coordinate Mg(2+). The Proton donor/acceptor role is filled by H160.

It belongs to the Cap18 exonuclease family. As to quaternary structure, homodimer.

Its function is as follows. Effector component of a CBASS antivirus system. CBASS (cyclic oligonucleotide-based antiphage signaling system) provides immunity against bacteriophage. The CD-NTase protein synthesizes cyclic nucleotides in response to infection; these serve as specific second messenger signals. The signals activate a diverse range of effectors, leading to bacterial cell death and thus abortive phage infection. A type III CBASS system. A sequence non-specific 3'-5' DNA exonuclease that preferentially degrades ssDNA with 3' overhangs or a mismatch at the 3' end. Expression of this CBASS system (Cap17-CapW-CdnC-Cap7-Cap6-Cap18-Cap19) in a susceptible E.coli (strain JP313) confers resistance to bacteriophage lambda cI--. This is 3'-5' DNA exonuclease Cap18 from Escherichia coli.